We begin with the raw amino-acid sequence, 503 residues long: ATP synthase subunit alpha (503 aa).

169–176 contacts ATP; that stretch reads GDRQTGKT.

This sequence belongs to the ATPase alpha/beta chains family. As to quaternary structure, F-type ATPases have 2 components, CF(1) - the catalytic core - and CF(0) - the membrane proton channel. CF(1) has five subunits: alpha(3), beta(3), gamma(1), delta(1), epsilon(1). CF(0) has three main subunits: a(1), b(2) and c(9-12). The alpha and beta chains form an alternating ring which encloses part of the gamma chain. CF(1) is attached to CF(0) by a central stalk formed by the gamma and epsilon chains, while a peripheral stalk is formed by the delta and b chains.

It localises to the cell membrane. The enzyme catalyses ATP + H2O + 4 H(+)(in) = ADP + phosphate + 5 H(+)(out). Produces ATP from ADP in the presence of a proton gradient across the membrane. The alpha chain is a regulatory subunit. This is ATP synthase subunit alpha from Macrococcus caseolyticus (strain JCSC5402) (Macrococcoides caseolyticum).